An 890-amino-acid polypeptide reads, in one-letter code: MSQPFRSADIRQAFIDFFISKQHTPVASSSLIPHNDPTLLFTNAGMNQFKETFLGMEPRDYTRAVTSQKCVRAGGKHNDLDNVGYTARHHTFFEMLGNFSFGDYFKQAGIGYIWEFLTSDEWLAIDKNRLYVTIYETDDEAFDIWHKDIGIPSERIIRIGDNKGAPYASDNFWTMGDTGPCGPCTEVFYDHGADIEGGLPGTPEEDGDRYIEIWNCVFMQFNRQKDGTMLPLPAPSVDTGMGLERISAIMQGVHGNYEIDLFVHLMDAAAEILEIENQQQSSLKVIADHIRAVSFLIADGVTPSNEGRGYVLRRVIRRAVRHGNKLGADSDFFYKMVAPLVAEMGIAYPELKDKQSVIENTIQKEEAQFAKTLAQGLRLLASELEGLQDGDTLSGEAAFKLYDTYGFPVDLTADITRERGIVIDEAEFDEHMQAQRERARDAGKFDVDYSSVIQVENPTTFIGYEQLEQEGVAIDALYQDGNPADSLTEGMEGVVVLDRTPFYAEGGGQVGELGEIRTATGVFDVQDTKKSGQAIIHYGVVTMGEIKTKQTADAQVLSSIRAASAKNHSATHLLHAALREVLGDAVTQKGSLVSSEVLRFDFSYDKPVSPAEIMRIERLVNEQIQANTPTRIENMPIDEAIKQGAMALFGEKYGNDVRVLTMGTDSIVDGQRMPFSIELCGGLHVQRTGDIGVLKITSESGIAAGIRRIEAVTAMNAIKNIQQSEQQLSELASQLKVKRPEVAQRVRTMADKQRDLEKQLERLEQKIASAQAANLLDEVQTIAGIPLLISTLSGVDGKSIRTLMDDIKSKLPDSVIVLIGDKDEQLALAANVAKSVTDRIKAGDIIRYLAGELGGKGGGKPDYAQGGAPKSNNSAAVIAALPAWVAAQLS.

Zn(2+)-binding residues include H568, H572, C680, and H684.

This sequence belongs to the class-II aminoacyl-tRNA synthetase family. It depends on Zn(2+) as a cofactor.

It localises to the cytoplasm. It carries out the reaction tRNA(Ala) + L-alanine + ATP = L-alanyl-tRNA(Ala) + AMP + diphosphate. Functionally, catalyzes the attachment of alanine to tRNA(Ala) in a two-step reaction: alanine is first activated by ATP to form Ala-AMP and then transferred to the acceptor end of tRNA(Ala). Also edits incorrectly charged Ser-tRNA(Ala) and Gly-tRNA(Ala) via its editing domain. The polypeptide is Alanine--tRNA ligase (Psychrobacter arcticus (strain DSM 17307 / VKM B-2377 / 273-4)).